The sequence spans 548 residues: Synaptic vesicle 2-related protein (548 aa).

The Cytoplasmic segment spans residues 1–87 (MEEDLFQLRQ…GFGKFQWKLS (87 aa)). Phosphoserine occurs at positions 25 and 31. The chain crosses the membrane as a helical span at residues 88-108 (VLTGLAWMADAMEMMILSILA). Residues 109–122 (PQLHCEWRLPSWQV) lie on the Vesicular side of the membrane. A helical transmembrane segment spans residues 123–143 (ALLTSVVFVGMMSSSTLWGNI). The Cytoplasmic segment spans residues 144 to 156 (SDQYGRKTGLKIS). A helical transmembrane segment spans residues 157–177 (VLWTLYYGILSAFAPVYSWIL). The Vesicular segment spans residues 178-180 (VLR). Residues 181 to 201 (GLVGFGIGGVPQSVTLYAEFL) traverse the membrane as a helical segment. The Cytoplasmic portion of the chain corresponds to 202–209 (PMKARAKC). A helical membrane pass occupies residues 210–230 (ILLIEVFWAIGTVFEVVLAVF). Topologically, residues 231–238 (VMPSLGWR) are vesicular. The helical transmembrane segment at 239–259 (WLLILSAVPLLLFAVLCFWLP) threads the bilayer. Residues 260–316 (ESARYDVLSGNQEKAIATLKRIATENGAPMPLGKLIISRQEDRGKMRDLFTPHFRWT) lie on the Cytoplasmic side of the membrane. A helical membrane pass occupies residues 317–337 (TLLLWFIWFSNAFSYYGLVLL). The Vesicular portion of the chain corresponds to 338-373 (TTELFQAGDVCSISSRKKAVEAKCSLACEYLSEEDY). The helical transmembrane segment at 374-394 (MDLLWTTLSEFPGVLVTLWII) threads the bilayer. The Cytoplasmic portion of the chain corresponds to 395–401 (DRLGRKK). A helical membrane pass occupies residues 402–422 (TMALCFVVFSFCSLLLFICVG). At 423–425 (RNM) the chain is on the vesicular side. The chain crosses the membrane as a helical span at residues 426–446 (LTLLLFIARAFISGGFQAAYV). Residues 447-457 (YTPEVYPTATR) are Cytoplasmic-facing. The helical transmembrane segment at 458 to 478 (ALGLGTCSGMARVGALITPFI) threads the bilayer. Residues 479–489 (AQVMLESSVYL) are Vesicular-facing. The chain crosses the membrane as a helical span at residues 490-510 (TLAVYSGCCLLAALASCFLPI). At 511 to 548 (ETKGRGLQESSHREWGQEMVGRGAHGTGVARSNSGSQE) the chain is on the cytoplasmic side. Positions 528-548 (EMVGRGAHGTGVARSNSGSQE) are disordered. Position 542 is a phosphoserine (serine 542).

This sequence belongs to the major facilitator superfamily. In terms of tissue distribution, detected in brain and adrenal medulla.

Its subcellular location is the cytoplasmic vesicle. It is found in the secretory vesicle. The protein resides in the synaptic vesicle membrane. The polypeptide is Synaptic vesicle 2-related protein (SVOP) (Bos taurus (Bovine)).